The sequence spans 298 residues: Glycine--tRNA ligase alpha subunit (298 aa).

This sequence belongs to the class-II aminoacyl-tRNA synthetase family. In terms of assembly, tetramer of two alpha and two beta subunits.

It is found in the cytoplasm. The catalysed reaction is tRNA(Gly) + glycine + ATP = glycyl-tRNA(Gly) + AMP + diphosphate. The chain is Glycine--tRNA ligase alpha subunit (glyQ) from Helicobacter pylori (strain J99 / ATCC 700824) (Campylobacter pylori J99).